We begin with the raw amino-acid sequence, 729 residues long: Solute carrier family 15 member 2 (729 aa).

Residues 1–34 (MNPFQKNESKETLFSPVSTEEMLPGPPSPPKKST) are disordered. Residues 1-57 (MNPFQKNESKETLFSPVSTEEMLPGPPSPPKKSTPKLFGSSYPLSIAFIVVNEFCER) are Cytoplasmic-facing. S9 carries the post-translational modification Phosphoserine. Phosphothreonine is present on T12. S28 bears the Phosphoserine mark. Residues 58 to 78 (FSYYGMKAVLTLYFLYFLHWN) form a helical membrane-spanning segment. Residues 79–87 (EDTSTSVYH) are Extracellular-facing. The helical transmembrane segment at 88–108 (AFSSLCYFTPILGAAIADSWL) threads the bilayer. The Cytoplasmic portion of the chain corresponds to 109 to 113 (GKFKT). Residues 114 to 134 (IIYLSLVYVLGHVFKSLGAIP) form a helical membrane-spanning segment. Topologically, residues 135 to 139 (ILGGK) are extracellular. A helical transmembrane segment spans residues 140–160 (MLHTILSLVGLSLIALGTGGI). Over 161 to 183 (KPCVAAFGGDQFEEEHAEARTRY) the chain is Cytoplasmic. The helical transmembrane segment at 184 to 204 (FSVFYLSINAGSLISTFITPM) threads the bilayer. Residues 205–217 (LRGDVKCFGEDCY) are Extracellular-facing. Residues 218–238 (ALAFGIPGLLMVLALVVFAMG) traverse the membrane as a helical segment. Residues 239–295 (SKMYRKPPPEGNIVAQVTKCIWFAICNRFRNRSEDIPKRQHWLDWAAEKYPKHLIMD) are Cytoplasmic-facing. The chain crosses the membrane as a helical span at residues 296–316 (VKALTRILFLYIPLPMFWALL). At 317 to 343 (DQQGSRWTLQANKMDGDLGFFVLQPDQ) the chain is on the extracellular side. A helical transmembrane segment spans residues 344-364 (MQVLNPFLVLVFIPLFDLVIY). Residues 365-380 (RLISKCGVNFSSLRKM) are Cytoplasmic-facing. Residues 381-401 (AVGMILACLAFAVAALVEIKI) traverse the membrane as a helical segment. The Extracellular portion of the chain corresponds to 402–611 (NGMIHPQPAS…PANKLSIAWQ (210 aa)). The segment at 402–611 (NGMIHPQPAS…PANKLSIAWQ (210 aa)) is extracellular domain (ECD). N-linked (GlcNAc...) asparagine glycans are attached at residues N448, N472, N528, and N587. A helical transmembrane segment spans residues 612–632 (LPQYVLVTAAEVMFSVTGLEF). Residues 633–643 (SYSQAPSSMKS) are Cytoplasmic-facing. A helical transmembrane segment spans residues 644–664 (VLQAAWLLTVAVGNIIVLIVA). Residues 665 to 674 (QFSGLVQWAE) are Extracellular-facing. The helical transmembrane segment at 675 to 695 (FVLFSCLLLVVCLIFSVMGYY) threads the bilayer. The Cytoplasmic portion of the chain corresponds to 696 to 729 (YVPLKSEGIHEATEKQIPHIQGNMINLETKNTRL).

It belongs to the major facilitator superfamily. Proton-dependent oligopeptide transporter (POT/PTR) (TC 2.A.17) family. As to quaternary structure, interacts (via extracellular domain region) with trypsin. In terms of tissue distribution, expressed in kidney brush border cells (at protein level). Highly expressed in macrophages.

It localises to the apical cell membrane. The protein localises to the cytoplasmic vesicle. Its subcellular location is the phagosome membrane. The protein resides in the cell membrane. It catalyses the reaction N-acetyl-D-muramoyl-L-alanyl-D-isoglutamine(out) + 3 H(+)(out) = N-acetyl-D-muramoyl-L-alanyl-D-isoglutamine(in) + 3 H(+)(in). It carries out the reaction a dipeptide(out) + 2 H(+)(out) = a dipeptide(in) + 2 H(+)(in). The enzyme catalyses glycyl-L-leucine(out) + 2 H(+)(out) = glycyl-L-leucine(in) + 2 H(+)(in). The catalysed reaction is glycyl-L-lysine(out) + 2 H(+)(out) = glycyl-L-lysine(in) + 2 H(+)(in). It catalyses the reaction glycyl-L-glutamate(out) + 3 H(+)(out) = glycyl-L-glutamate(in) + 3 H(+)(in). It carries out the reaction L-alanyl-L-alanine(out) + 2 H(+)(out) = L-alanyl-L-alanine(in) + 2 H(+)(in). The enzyme catalyses an L-amino acid tripeptide(out) + 2 H(+)(out) = an L-amino acid tripeptide(in) + 2 H(+)(in). The catalysed reaction is carnosine(out) + 2 H(+)(out) = carnosine(in) + 2 H(+)(in). Proton-coupled amino-acid transporter that transports oligopeptides of 2 to 4 amino acids with a preference for dipeptides. Transports neutral and anionic dipeptides with a proton to peptide stoichiometry of 2:1 or 3:1. In kidney, involved in the absorption of circulating di- and tripeptides from the glomerular filtrate. Can also transport beta-lactam antibiotics, such as the aminocephalosporin cefadroxil, and other antiviral and anticancer drugs. Transports the dipeptide-like aminopeptidase inhibitor bestatin. Also able to transport carnosine. Involved in innate immunity by promoting the detection of microbial pathogens by NOD-like receptors (NLRs). Mediates transport of bacterial peptidoglycans across the plasma membrane or, in macrophages, the phagosome membrane: catalyzes the transport of certain bacterial peptidoglycans, such as muramyl dipeptide (MDP), the NOD2 ligand. In Mus musculus (Mouse), this protein is Solute carrier family 15 member 2.